Here is a 328-residue protein sequence, read N- to C-terminus: Tetraacyldisaccharide 4'-kinase (328 aa).

55–62 (TAGGNGKT) is a binding site for ATP.

It belongs to the LpxK family.

The enzyme catalyses lipid A disaccharide (E. coli) + ATP = lipid IVA (E. coli) + ADP + H(+). Its pathway is glycolipid biosynthesis; lipid IV(A) biosynthesis; lipid IV(A) from (3R)-3-hydroxytetradecanoyl-[acyl-carrier-protein] and UDP-N-acetyl-alpha-D-glucosamine: step 6/6. Transfers the gamma-phosphate of ATP to the 4'-position of a tetraacyldisaccharide 1-phosphate intermediate (termed DS-1-P) to form tetraacyldisaccharide 1,4'-bis-phosphate (lipid IVA). This is Tetraacyldisaccharide 4'-kinase (lpxK) from Escherichia coli (strain K12).